We begin with the raw amino-acid sequence, 538 residues long: Carboxypeptidase 2 (538 aa).

An N-terminal signal peptide occupies residues 1 to 21 (MVAYRFLTLISLGLGSHCASA). Asparagine 46 carries an N-linked (GlcNAc...) asparagine glycan. A disordered region spans residues 53-76 (PAFTSPGTVPRGFSDGTSGPTRDE). The 281-residue stretch at 71–351 (GPTRDETMEG…VMVKSILQTA (281 aa)) folds into the Peptidase M14 domain. The Zn(2+) site is built by histidine 136, glutamate 139, and histidine 224. The active-site Proton donor/acceptor is the glutamate 322. 2 N-linked (GlcNAc...) asparagine glycosylation sites follow: asparagine 393 and asparagine 459.

It belongs to the peptidase M14 family. Requires Zn(2+) as cofactor.

It is found in the secreted. Extracellular metalloprotease that contributes to pathogenicity. This chain is Carboxypeptidase 2 (MCPB), found in Trichophyton equinum (Horse ringworm fungus).